The following is a 232-amino-acid chain: MSEDTPLVVAMDGPSGTGKSSVSRRLATRLGARYLDTGAMYRVATLRVLRAGVELTDPAAIAAAVKELPLTIGTDPSREVIELDGEDVSAEIRGDAVTKAVSAVSAVPEVRDLLVAAQRDIAADARRIVVEGRDIGTVVLPAADAKIYLTASAEARAERRNQQNIREGRGDDYAAVLADVQRRDTLDSTRAVSPLRPAADAVLVDTSELTMDEVIDELSRVVAQQISTGSAQ.

Positions 1–21 (MSEDTPLVVAMDGPSGTGKSS) are disordered. 13-21 (GPSGTGKSS) is a binding site for ATP.

It belongs to the cytidylate kinase family. Type 1 subfamily.

The protein localises to the cytoplasm. It catalyses the reaction CMP + ATP = CDP + ADP. The catalysed reaction is dCMP + ATP = dCDP + ADP. The sequence is that of Cytidylate kinase from Nocardia farcinica (strain IFM 10152).